The primary structure comprises 353 residues: Protein pelota homolog (353 aa).

It belongs to the eukaryotic release factor 1 family. Pelota subfamily. Monomer. A divalent metal cation is required as a cofactor.

It localises to the cytoplasm. Its function is as follows. May function in recognizing stalled ribosomes, interact with stem-loop structures in stalled mRNA molecules, and effect endonucleolytic cleavage of the mRNA. May play a role in the release non-functional ribosomes and degradation of damaged mRNAs. Has endoribonuclease activity. The chain is Protein pelota homolog from Methanothermobacter thermautotrophicus (strain ATCC 29096 / DSM 1053 / JCM 10044 / NBRC 100330 / Delta H) (Methanobacterium thermoautotrophicum).